We begin with the raw amino-acid sequence, 923 residues long: Isoleucine--tRNA ligase (923 aa).

The 'HIGH' region motif lies at 57–67 (PYANGDIHMGH). L-isoleucyl-5'-AMP is bound at residue Glu553. Residues 594–598 (KMSKS) carry the 'KMSKS' region motif. Lys597 serves as a coordination point for ATP. Positions 888, 891, 908, and 911 each coordinate Zn(2+).

This sequence belongs to the class-I aminoacyl-tRNA synthetase family. IleS type 1 subfamily. As to quaternary structure, monomer. It depends on Zn(2+) as a cofactor.

Its subcellular location is the cytoplasm. The enzyme catalyses tRNA(Ile) + L-isoleucine + ATP = L-isoleucyl-tRNA(Ile) + AMP + diphosphate. Its function is as follows. Catalyzes the attachment of isoleucine to tRNA(Ile). As IleRS can inadvertently accommodate and process structurally similar amino acids such as valine, to avoid such errors it has two additional distinct tRNA(Ile)-dependent editing activities. One activity is designated as 'pretransfer' editing and involves the hydrolysis of activated Val-AMP. The other activity is designated 'posttransfer' editing and involves deacylation of mischarged Val-tRNA(Ile). The protein is Isoleucine--tRNA ligase of Shouchella clausii (strain KSM-K16) (Alkalihalobacillus clausii).